The chain runs to 325 residues: 7,8-didemethyl-8-hydroxy-5-deazariboflavin synthase (325 aa).

One can recognise a Radical SAM core domain in the interval 1–241; the sequence is MTYSKNVFVP…SDIAVQVAPN (241 aa). 3 residues coordinate [4Fe-4S] cluster: C15, C19, and C22.

This sequence belongs to the radical SAM superfamily. CofG family. As to quaternary structure, consists of two subunits, CofG and CofH. The cofactor is [4Fe-4S] cluster.

It carries out the reaction 5-amino-5-(4-hydroxybenzyl)-6-(D-ribitylimino)-5,6-dihydrouracil + S-adenosyl-L-methionine = 7,8-didemethyl-8-hydroxy-5-deazariboflavin + 5'-deoxyadenosine + L-methionine + NH4(+) + H(+). The protein operates within cofactor biosynthesis; coenzyme F0 biosynthesis. In terms of biological role, catalyzes the radical-mediated synthesis of 7,8-didemethyl-8-hydroxy-5-deazariboflavin from 5-amino-5-(4-hydroxybenzyl)-6-(D-ribitylimino)-5,6-dihydrouracil. In Methanosarcina barkeri (strain Fusaro / DSM 804), this protein is 7,8-didemethyl-8-hydroxy-5-deazariboflavin synthase.